The sequence spans 124 residues: Glycine cleavage system H protein (124 aa).

Positions L22 to K104 constitute a Lipoyl-binding domain. K63 carries the post-translational modification N6-lipoyllysine.

The protein belongs to the GcvH family. In terms of assembly, the glycine cleavage system is composed of four proteins: P, T, L and H. It depends on (R)-lipoate as a cofactor.

Functionally, the glycine cleavage system catalyzes the degradation of glycine. The H protein shuttles the methylamine group of glycine from the P protein to the T protein. The protein is Glycine cleavage system H protein of Acinetobacter baumannii (strain SDF).